The primary structure comprises 133 residues: MAMYPRELKWGVAHIYSSFNNTHVHITDLTGAETVARVTGGMVVKADREKPSPYAAMIAASRAAQKAMERGIAAIHIKVRAPGGHGPKTPGPGAQAAIRALARAGFIIGRIEDVTPIPHDTTRRPGGRRGRRV.

This sequence belongs to the universal ribosomal protein uS11 family. As to quaternary structure, part of the 30S ribosomal subunit.

Functionally, located on the platform of the 30S subunit. The sequence is that of Small ribosomal subunit protein uS11 from Aeropyrum pernix (strain ATCC 700893 / DSM 11879 / JCM 9820 / NBRC 100138 / K1).